The following is a 558-amino-acid chain: V-set and immunoglobulin domain-containing protein 10 (558 aa).

A signal peptide spans 1-20 (MAGLRVLLCLGALLARQGSA). The Extracellular portion of the chain corresponds to 21–426 (GLQLLLNPSR…IWLSVKEPLN (406 aa)). Asn32, Asn60, Asn121, Asn150, Asn159, and Asn218 each carry an N-linked (GlcNAc...) asparagine glycan. 4 Ig-like C2-type domains span residues 37–140 (PNSE…RLRV), 144–235 (PAYV…RKVT), 248–327 (PQCS…VKLS), and 332–420 (PSQP…IWLS). Cysteines 65 and 124 form a disulfide. 2 cysteine pairs are disulfide-bonded: Cys174–Cys221 and Cys265–Cys308. The N-linked (GlcNAc...) asparagine glycan is linked to Asn344. A disulfide bridge links Cys349 with Cys404. A helical membrane pass occupies residues 427 to 447 (IGGIVGTVVSLLLLGLAVVSG). The Cytoplasmic segment spans residues 448 to 558 (LTLYYSPAFW…GIVQEDGKPV (111 aa)). Acidic residues predominate over residues 477-506 (DSEEEEEEEEEEEEKEDVAEEVEQETNETE). Disordered stretches follow at residues 477–515 (DSEE…ISKH) and 532–558 (MGNG…GKPV).

The protein resides in the membrane. The sequence is that of V-set and immunoglobulin domain-containing protein 10 (Vsig10) from Mus musculus (Mouse).